The chain runs to 257 residues: AN1-type zinc finger protein 2B (257 aa).

2 AN1-type zinc fingers span residues 4–52 (PDLG…QKDI) and 94–142 (KIFT…HPTS). Cys-10, Cys-15, Cys-25, Cys-28, Cys-33, His-36, His-42, Cys-44, Cys-100, Cys-105, Cys-115, Cys-118, Cys-123, His-126, His-132, and Cys-134 together coordinate Zn(2+). The tract at residues 141-151 (TSRAGLAAISR) is VCP/p97-interacting motif (VIM). The disordered stretch occupies residues 153–187 (QAVASTSTVPSPSQTMPSCTSPSRATTRSPSWTAP). Over residues 155 to 171 (VASTSTVPSPSQTMPSC) the composition is skewed to polar residues. Phosphoserine occurs at positions 163 and 173. The span at 172-186 (TSPSRATTRSPSWTA) shows a compositional bias: low complexity. UIM domains follow at residues 197-216 (SEDE…TKPQ) and 221-240 (QEEE…AEYQ). Position 254 is a cysteine methyl ester (Cys-254). Cys-254 carries the S-geranylgeranyl cysteine lipid modification. The CAAX motif motif lies at 254–257 (CSLC). Positions 255–257 (SLC) are cleaved as a propeptide — removed in mature form.

As to quaternary structure, binds 'Lys-48'-linked polyubiquitin chains of ubiquitinated proteins. Associates with the proteasome complex; upon exposure to arsenite. Interacts (via VIM motif) with VCP; the interaction is direct. Interacts with BAG6. Interacts with IGF1R (nascent precursor form). Interacts with DERL1, FAF2, NPLOC4 and UFD1; probably through VCP. In terms of processing, phosphorylated by MAPK14. Phosphorylation has no effect on association with the proteasome complex.

Its subcellular location is the endoplasmic reticulum membrane. Plays a role in protein homeostasis by regulating both the translocation and the ubiquitin-mediated proteasomal degradation of nascent proteins at the endoplasmic reticulum. It is involved in the regulation of signal-mediated translocation of proteins into the endoplasmic reticulum. It also plays a role in the ubiquitin-mediated proteasomal degradation of proteins for which signal-mediated translocation to the endoplasmic reticulum has failed. May therefore function in the endoplasmic reticulum stress-induced pre-emptive quality control, a mechanism that selectively attenuates the translocation of newly synthesized proteins into the endoplasmic reticulum and reroutes them to the cytosol for proteasomal degradation. By controlling the steady-state expression of the IGF1R receptor, indirectly regulates the insulin-like growth factor receptor signaling pathway. The polypeptide is AN1-type zinc finger protein 2B (Homo sapiens (Human)).